A 394-amino-acid polypeptide reads, in one-letter code: Endothelial cell-selective adhesion molecule (394 aa).

A signal peptide spans 1-29 (MILPARTPETSLLRVLFLGLSTLAAFSLA). Residues 30-251 (QMELHVPPGL…LDVMTGSKAA (222 aa)) lie on the Extracellular side of the membrane. One can recognise an Ig-like V-type domain in the interval 37 to 146 (PGLNKLEAVE…DGKNIGHSIK (110 aa)). Asn-111, Asn-172, Asn-216, and Asn-239 each carry an N-linked (GlcNAc...) asparagine glycan. Positions 156–243 (PAPPSCSFQG…GFAQCNVTLD (88 aa)) constitute an Ig-like C2-type domain. A disulfide bridge connects residues Cys-177 and Cys-227. The chain crosses the membrane as a helical span at residues 252-272 (VVAGAVVGTFVGLVLIAGLVL). Over 273–394 (LYQRRSKTLE…PAQSQAGSLV (122 aa)) the chain is Cytoplasmic. The tract at residues 300-372 (WTKGSDTISK…SLTPGGVSSS (73 aa)) is disordered. Polar residues-rich tracts occupy residues 303–318 (GSDT…SVTS) and 335–347 (FTPT…QALS). Ser-304 is subject to Phosphoserine. Phosphothreonine occurs at positions 336 and 338. A phosphoserine mark is found at Ser-340, Ser-343, and Ser-348.

In terms of assembly, interacts with MAGI1.

The protein localises to the cell junction. It is found in the adherens junction. Its subcellular location is the tight junction. The protein resides in the cell membrane. Its function is as follows. Can mediate aggregation most likely through a homophilic molecular interaction. This is Endothelial cell-selective adhesion molecule (Esam) from Rattus norvegicus (Rat).